The sequence spans 445 residues: Elongation factor 1-alpha (445 aa).

Residues 5 to 230 form the tr-type G domain; sequence KVHISLVVIG…DNLEPPKRPS (226 aa). The segment at 14-21 is G1; sequence GHVDSGKS. GTP is bound at residue 14–21; it reads GHVDSGKS. Lysine 55 is modified (N6,N6-dimethyllysine). Residues 70 to 74 are G2; it reads CITID. Residue lysine 79 is modified to N6,N6,N6-trimethyllysine. A G3 region spans residues 91-94; sequence DAPG. Residues 91–95 and 153–156 each bind GTP; these read DAPGH and NKFD. Residues 153 to 156 form a G4 region; that stretch reads NKFD. Lysine 187 carries the post-translational modification N6,N6,N6-trimethyllysine. The segment at 194–196 is G5; that stretch reads SGW. At lysine 261 the chain carries N6-methyllysine. An N6,N6,N6-trimethyllysine mark is found at lysine 306 and lysine 396.

This sequence belongs to the TRAFAC class translation factor GTPase superfamily. Classic translation factor GTPase family. EF-Tu/EF-1A subfamily.

It localises to the cytoplasm. Functionally, this protein promotes the GTP-dependent binding of aminoacyl-tRNA to the A-site of ribosomes during protein biosynthesis. This is Elongation factor 1-alpha (TEF) from Euglena gracilis.